The chain runs to 239 residues: Ribonuclease 3 (239 aa).

The 126-residue stretch at 12 to 137 (RAKLEGLIGH…LIAAIYLDGG (126 aa)) folds into the RNase III domain. Mg(2+) is bound at residue glutamate 50. Aspartate 54 is a catalytic residue. Residues aspartate 123 and glutamate 126 each contribute to the Mg(2+) site. Glutamate 126 is a catalytic residue. Residues 162–231 (DAKTELQEWS…ATKMLEREGI (70 aa)) enclose the DRBM domain.

It belongs to the ribonuclease III family. Homodimer. Mg(2+) is required as a cofactor.

It localises to the cytoplasm. The catalysed reaction is Endonucleolytic cleavage to 5'-phosphomonoester.. Its function is as follows. Digests double-stranded RNA. Involved in the processing of primary rRNA transcript to yield the immediate precursors to the large and small rRNAs (23S and 16S). Processes some mRNAs, and tRNAs when they are encoded in the rRNA operon. Processes pre-crRNA and tracrRNA of type II CRISPR loci if present in the organism. The sequence is that of Ribonuclease 3 from Rhizobium leguminosarum bv. trifolii (strain WSM2304).